Consider the following 176-residue polypeptide: ATP-dependent protease subunit HslV (176 aa).

The active site involves threonine 2. Residues glycine 158, cysteine 161, and threonine 164 each coordinate Na(+).

The protein belongs to the peptidase T1B family. HslV subfamily. As to quaternary structure, a double ring-shaped homohexamer of HslV is capped on each side by a ring-shaped HslU homohexamer. The assembly of the HslU/HslV complex is dependent on binding of ATP.

It is found in the cytoplasm. The enzyme catalyses ATP-dependent cleavage of peptide bonds with broad specificity.. With respect to regulation, allosterically activated by HslU binding. Functionally, protease subunit of a proteasome-like degradation complex believed to be a general protein degrading machinery. The polypeptide is ATP-dependent protease subunit HslV (Pasteurella multocida (strain Pm70)).